Here is a 317-residue protein sequence, read N- to C-terminus: Orange carotenoid-binding protein (317 aa).

Positions 18 to 169 (ADVVPATIAR…DMGFDTSKLG (152 aa)) constitute an OCP N-terminal domain. The 3'-hydroxyechinenone site is built by Leu-37, Tyr-203, and Trp-290.

It belongs to the orange carotenoid-binding protein family. As to quaternary structure, homodimer. Requires 3'-hydroxyechinenone as cofactor. Proteolytically cleaved into a red 16.7 kDa form named red carotenoid-binding protein (RCP) which lacks 15 residues from the N-terminus and approximately 150 residues from the C-terminus.

The protein resides in the cellular thylakoid membrane. Functionally, acts as a blue-light photoreceptor and photo-protectant. Essential for inhibiting damaged induced by excess blue-green light via a process known as non-photochemical quenching (NPQ). Binding carotenoids improves OCP's intrinsic photoprotectant activity by broadening its absorption spectrum and facilitating the dissipation of absorbed energy. In the dark or dim light the stable inactive form (OCP-O) is orange, upon illumination with blue-green light it converts to a metastable active red form (OCP-R), inducing energy dissipation, quenching cellular fluorescence via NPQ. In Limnospira maxima (Arthrospira maxima), this protein is Orange carotenoid-binding protein.